Reading from the N-terminus, the 281-residue chain is Pantothenate synthetase (281 aa).

Position 30–37 (30–37) interacts with ATP; that stretch reads MGNLHQGH. His37 serves as the catalytic Proton donor. Gln61 provides a ligand contact to (R)-pantoate. Gln61 is a binding site for beta-alanine. Residue 149–152 coordinates ATP; the sequence is GNKD. Residue Gln155 participates in (R)-pantoate binding. ATP-binding positions include Ile178 and 186-189; that span reads MSSR.

This sequence belongs to the pantothenate synthetase family. As to quaternary structure, homodimer.

Its subcellular location is the cytoplasm. It carries out the reaction (R)-pantoate + beta-alanine + ATP = (R)-pantothenate + AMP + diphosphate + H(+). Its pathway is cofactor biosynthesis; (R)-pantothenate biosynthesis; (R)-pantothenate from (R)-pantoate and beta-alanine: step 1/1. In terms of biological role, catalyzes the condensation of pantoate with beta-alanine in an ATP-dependent reaction via a pantoyl-adenylate intermediate. The polypeptide is Pantothenate synthetase (Shewanella sp. (strain ANA-3)).